A 336-amino-acid chain; its full sequence is Holliday junction branch migration complex subunit RuvB (336 aa).

The segment at 4-184 (SDRLISSQSI…FGIVQRLEYY (181 aa)) is large ATPase domain (RuvB-L). ATP-binding positions include Ile23, Arg24, Gly65, Lys68, Thr69, Thr70, 131 to 133 (EDY), Arg174, Tyr184, and Arg221. Thr69 is a binding site for Mg(2+). The segment at 185 to 255 (SVDSLTKIVA…MAQQALEMLE (71 aa)) is small ATPAse domain (RuvB-S). The interval 258–336 (QHGFDLMDRK…HFGFSAIEQE (79 aa)) is head domain (RuvB-H). Residues Arg313 and Arg318 each coordinate DNA.

Belongs to the RuvB family. In terms of assembly, homohexamer. Forms an RuvA(8)-RuvB(12)-Holliday junction (HJ) complex. HJ DNA is sandwiched between 2 RuvA tetramers; dsDNA enters through RuvA and exits via RuvB. An RuvB hexamer assembles on each DNA strand where it exits the tetramer. Each RuvB hexamer is contacted by two RuvA subunits (via domain III) on 2 adjacent RuvB subunits; this complex drives branch migration. In the full resolvosome a probable DNA-RuvA(4)-RuvB(12)-RuvC(2) complex forms which resolves the HJ.

It localises to the cytoplasm. The enzyme catalyses ATP + H2O = ADP + phosphate + H(+). In terms of biological role, the RuvA-RuvB-RuvC complex processes Holliday junction (HJ) DNA during genetic recombination and DNA repair, while the RuvA-RuvB complex plays an important role in the rescue of blocked DNA replication forks via replication fork reversal (RFR). RuvA specifically binds to HJ cruciform DNA, conferring on it an open structure. The RuvB hexamer acts as an ATP-dependent pump, pulling dsDNA into and through the RuvAB complex. RuvB forms 2 homohexamers on either side of HJ DNA bound by 1 or 2 RuvA tetramers; 4 subunits per hexamer contact DNA at a time. Coordinated motions by a converter formed by DNA-disengaged RuvB subunits stimulates ATP hydrolysis and nucleotide exchange. Immobilization of the converter enables RuvB to convert the ATP-contained energy into a lever motion, pulling 2 nucleotides of DNA out of the RuvA tetramer per ATP hydrolyzed, thus driving DNA branch migration. The RuvB motors rotate together with the DNA substrate, which together with the progressing nucleotide cycle form the mechanistic basis for DNA recombination by continuous HJ branch migration. Branch migration allows RuvC to scan DNA until it finds its consensus sequence, where it cleaves and resolves cruciform DNA. The polypeptide is Holliday junction branch migration complex subunit RuvB (Legionella pneumophila (strain Paris)).